A 534-amino-acid chain; its full sequence is CTP synthase (534 aa).

An amidoligase domain region spans residues 1 to 265; the sequence is MKYIIVTGGV…TTQLMKHLQL (265 aa). A CTP-binding site is contributed by Ser-12. Ser-12 provides a ligand contact to UTP. An ATP-binding site is contributed by 13 to 18; the sequence is GLGKGI. Position 53 (Tyr-53) interacts with L-glutamine. An ATP-binding site is contributed by Asp-70. Positions 70 and 140 each coordinate Mg(2+). CTP is bound by residues 147–149, 186–191, and Lys-222; these read DIE and KTKPSQ. UTP-binding positions include 186-191 and Lys-222; that span reads KTKPSQ. Residues 289–530 enclose the Glutamine amidotransferase type-1 domain; that stretch reads KLAIVGKYTN…VAAMCKYRKE (242 aa). Position 352 (Gly-352) interacts with L-glutamine. The active-site Nucleophile; for glutamine hydrolysis is Cys-379. L-glutamine-binding positions include 380-383, Glu-403, and Arg-460; that span reads LGMQ. Residues His-503 and Glu-505 contribute to the active site.

The protein belongs to the CTP synthase family. Homotetramer.

It carries out the reaction UTP + L-glutamine + ATP + H2O = CTP + L-glutamate + ADP + phosphate + 2 H(+). The enzyme catalyses L-glutamine + H2O = L-glutamate + NH4(+). The catalysed reaction is UTP + NH4(+) + ATP = CTP + ADP + phosphate + 2 H(+). It functions in the pathway pyrimidine metabolism; CTP biosynthesis via de novo pathway; CTP from UDP: step 2/2. With respect to regulation, allosterically activated by GTP, when glutamine is the substrate; GTP has no effect on the reaction when ammonia is the substrate. The allosteric effector GTP functions by stabilizing the protein conformation that binds the tetrahedral intermediate(s) formed during glutamine hydrolysis. Inhibited by the product CTP, via allosteric rather than competitive inhibition. In terms of biological role, catalyzes the ATP-dependent amination of UTP to CTP with either L-glutamine or ammonia as the source of nitrogen. Regulates intracellular CTP levels through interactions with the four ribonucleotide triphosphates. The chain is CTP synthase from Methanosarcina barkeri (strain Fusaro / DSM 804).